A 178-amino-acid chain; its full sequence is Caveolin-1 (178 aa).

At Ser2 the chain carries N-acetylserine. Phosphoserine is present on Ser2. Positions 2–94 (SGGKYVDSEG…WKASFTTFTV (93 aa)) are required for homooligomerization. Over 2 to 104 (SGGKYVDSEG…TKYWFYRLLS (103 aa)) the chain is Cytoplasmic. Lys5 is subject to N6-acetyllysine; alternate. Residue Lys5 forms a Glycyl lysine isopeptide (Lys-Gly) (interchain with G-Cter in ubiquitin); alternate linkage. Residue Tyr6 is modified to Phosphotyrosine. Ser9 is modified (phosphoserine). At Tyr14 the chain carries Phosphotyrosine; by ABL1. Tyr25 bears the Phosphotyrosine mark. Glycyl lysine isopeptide (Lys-Gly) (interchain with G-Cter in ubiquitin) cross-links involve residues Lys26 and Lys30. Residue Ser37 is modified to Phosphoserine. Glycyl lysine isopeptide (Lys-Gly) (interchain with G-Cter in ubiquitin) cross-links involve residues Lys39, Lys47, and Lys57. The segment at 82–94 (DGIWKASFTTFTV) is interaction with CAVIN3. The helical intramembrane region spans 105–125 (ALFGIPMALIWGIYFAILSFL). The Cytoplasmic portion of the chain corresponds to 126–178 (HIWAVVPCIKSFLIEIQCISRVYSIYVHTVCDPLFEAVGKIFSNVRINLQKEI). Residues 131 to 142 (VPCIKSFLIEIQ) form an interacts with SPRY1, SPRY2, SPRY3 and SPRY4 region. S-palmitoyl cysteine attachment occurs at residues Cys133, Cys143, and Cys156. The interval 149-160 (SIYVHTVCDPLF) is interacts with SPRY1, SPRY2, and SPRY4. The segment at 167–178 (FSNVRINLQKEI) is interacts with SPRY1, SPRY2, SPRY3 and SPRY4.

Belongs to the caveolin family. Homooligomer. Interacts (via the N-terminus) with DPP4; the interaction is direct. Forms a stable heterooligomeric complex with CAV2 that targets to lipid rafts and drives caveolae formation. Interacts with PACSIN2; this interaction induces membrane tubulation. Interacts with BMX, BTK, CTNNB1, CDH1, GLIPR2, JUP, NOSTRIN, SNAP25 and STX1A. Interacts with SLC7A9. Interacts with TGFBR1. Interacts with CAVIN3 (via leucine-zipper domain) in a cholesterol-sensitive manner. Interacts with CAVIN1. Interacts with EHD2 in a cholesterol-dependent manner. Forms a ternary complex with UBXN6 and VCP; mediates CAV1 targeting to lysosomes for degradation. Interacts with ABCG1; this interaction regulates ABCG1-mediated cholesterol efflux. Interacts with NEU3; this interaction enhances NEU3 sialidase activity within caveola. Interacts (via C-terminus) with SPRY1, SPRY2 (via C-terminus), SPRY3, and SPRY4. Interacts with IGFBP5; this interaction allows trafficking of IGFBP5 from the plasma membrane to the nucleus. Phosphorylated at Tyr-14 by ABL1 in response to oxidative stress. In terms of processing, ubiquitinated. Undergo monoubiquitination and multi- and/or polyubiquitination. Monoubiquitination of N-terminal lysines promotes integration in a ternary complex with UBXN6 and VCP which promotes oligomeric CAV1 targeting to lysosomes for degradation. Ubiquitinated by ZNRF1; leading to degradation and modulation of the TLR4-mediated immune response.

Its subcellular location is the golgi apparatus membrane. It is found in the cell membrane. The protein resides in the membrane. It localises to the caveola. The protein localises to the membrane raft. In terms of biological role, may act as a scaffolding protein within caveolar membranes. Forms a stable heterooligomeric complex with CAV2 that targets to lipid rafts and drives caveolae formation. Mediates the recruitment of CAVIN proteins (CAVIN1/2/3/4) to the caveolae. Interacts directly with G-protein alpha subunits and can functionally regulate their activity. Involved in the costimulatory signal essential for T-cell receptor (TCR)-mediated T-cell activation. Its binding to DPP4 induces T-cell proliferation and NF-kappa-B activation in a T-cell receptor/CD3-dependent manner. Recruits CTNNB1 to caveolar membranes and may regulate CTNNB1-mediated signaling through the Wnt pathway. Negatively regulates TGFB1-mediated activation of SMAD2/3 by mediating the internalization of TGFBR1 from membrane rafts leading to its subsequent degradation. Binds 20(S)-hydroxycholesterol (20(S)-OHC). The chain is Caveolin-1 (CAV1) from Chlorocebus aethiops (Green monkey).